We begin with the raw amino-acid sequence, 898 residues long: Serine/threonine-protein kinase TAO3 (898 aa).

A Protein kinase domain is found at 24–277 (FIDLHEIGHG…AAELLRHDFI (254 aa)). ATP contacts are provided by residues 30–38 (IGHGSFGAV) and K53. The active-site Proton acceptor is the D147. Disordered stretches follow at residues 316–372 (TRNG…EVMD) and 405–424 (DEAGHGDPRPEPRPTQSVQS). Phosphoserine is present on residues S324, S331, S343, S346, and S349. Residues 349 to 366 (SIPSVSVSTGSRSSSVNS) are compositionally biased toward low complexity. Position 357 is a phosphothreonine (T357). S359 is subject to Phosphoserine. A compositionally biased stretch (basic and acidic residues) spans 405–416 (DEAGHGDPRPEP). The residue at position 442 (S442) is a Phosphoserine. Coiled-coil stretches lie at residues 452–502 (EQEN…THAN), 548–649 (FLES…HAML), and 753–871 (ILKT…QERE). A disordered region spans residues 565 to 596 (EEMNEDHSTPKKEKQERISKHKENLQHTQAEE). K830 carries the N6-acetyllysine modification.

It belongs to the protein kinase superfamily. STE Ser/Thr protein kinase family. STE20 subfamily. Self-associates. Interacts with ERN1 and TRAF2. Interaction with TRAF2 is facilitated under ER stress conditions, such as treatment with tunicamycin, and may promote TRAF2 phosphorylation. Interacts (via N-terminus) with STK25; the interaction promotes STK25 abundance at the level of protein expression and/or stability. Autophosphorylated. Phosphorylation at Ser-324 by ATM following DNA damage is required for activation of the p38/MAPK14 stress-activated MAPK cascade. Phosphorylated at Ser-324 and on Tyr residues during T cell activation. Phosphorylated by LRRK2. In terms of tissue distribution, ubiquitously expressed, with a higher expression in the retina.

The protein resides in the cytoplasm. It localises to the cell membrane. Its subcellular location is the membrane raft. It is found in the lipid droplet. The catalysed reaction is L-seryl-[protein] + ATP = O-phospho-L-seryl-[protein] + ADP + H(+). The enzyme catalyses L-threonyl-[protein] + ATP = O-phospho-L-threonyl-[protein] + ADP + H(+). In terms of biological role, serine/threonine-protein kinase that acts as a regulator of the p38/MAPK14 stress-activated MAPK cascade and of the MAPK8/JNK cascade. In response to DNA damage, involved in the G2/M transition DNA damage checkpoint by activating the p38/MAPK14 stress-activated MAPK cascade, probably by mediating phosphorylation of upstream MAP2K3 and MAP2K6 kinases. Inhibits basal activity of the MAPK8/JNK cascade and diminishes its activation in response to epidermal growth factor (EGF). Positively regulates canonical T cell receptor (TCR) signaling by preventing early PTPN6/SHP1-mediated inactivation of LCK, ensuring sustained TCR signaling that is required for optimal activation and differentiation of T cells. Phosphorylates PTPN6/SHP1 on 'Thr-396', leading to its polyubiquitination and subsequent proteasomal degradation. Required for cell surface expression of metalloprotease ADAM10 on type 1 transitional B cells which is necessary for their NOTCH-mediated development into marginal zone B cells. Also required for the NOTCH-mediated terminal differentiation of splenic conventional type 2 dendritic cells. Positively regulates osteoblast differentiation by acting as an upstream activator of the JNK pathway. Promotes JNK signaling in hepatocytes and positively regulates hepatocyte lipid storage by inhibiting beta-oxidation and triacylglycerol secretion while enhancing lipid synthesis. Restricts age-associated inflammation by negatively regulating differentiation of macrophages and their production of pro-inflammatory cytokines. Plays a role in negatively regulating the abundance of regulatory T cells in white adipose tissue. This Rattus norvegicus (Rat) protein is Serine/threonine-protein kinase TAO3 (Taok3).